The primary structure comprises 365 residues: Succinyl-diaminopimelate desuccinylase (365 aa).

H65 provides a ligand contact to Zn(2+). The active site involves D67. D96 serves as a coordination point for Zn(2+). E126 (proton acceptor) is an active-site residue. Zn(2+) contacts are provided by E127, E155, and H340.

Belongs to the peptidase M20A family. DapE subfamily. Homodimer. Zn(2+) serves as cofactor. It depends on Co(2+) as a cofactor.

The catalysed reaction is N-succinyl-(2S,6S)-2,6-diaminopimelate + H2O = (2S,6S)-2,6-diaminopimelate + succinate. It participates in amino-acid biosynthesis; L-lysine biosynthesis via DAP pathway; LL-2,6-diaminopimelate from (S)-tetrahydrodipicolinate (succinylase route): step 3/3. Functionally, catalyzes the hydrolysis of N-succinyl-L,L-diaminopimelic acid (SDAP), forming succinate and LL-2,6-diaminopimelate (DAP), an intermediate involved in the bacterial biosynthesis of lysine and meso-diaminopimelic acid, an essential component of bacterial cell walls. The protein is Succinyl-diaminopimelate desuccinylase of Campylobacter jejuni subsp. doylei (strain ATCC BAA-1458 / RM4099 / 269.97).